Consider the following 258-residue polypeptide: Peptidase inhibitor 15 (258 aa).

Residues M1 to A19 form the signal peptide. Positions S20–R60 are excised as a propeptide. Residues N26, N36, and N124 are each glycosylated (N-linked (GlcNAc...) asparagine). Positions L71–Y211 constitute an SCP domain.

It belongs to the CRISP family. In terms of processing, N-glycosylated. In terms of tissue distribution, weakly expressed. Expressed at low level in prostate, mammary gland, salivary gland and thyroid gland.

The protein resides in the secreted. Its function is as follows. Serine protease inhibitor which displays weak inhibitory activity against trypsin. May play a role in facial patterning during embryonic development. This Homo sapiens (Human) protein is Peptidase inhibitor 15 (PI15).